The sequence spans 206 residues: Pyridoxine/pyridoxamine 5'-phosphate oxidase (206 aa).

FMN is bound by residues 49–54 (RMVLLK), 69–70 (YT), Lys76, and Gln98. Lys54 contributes to the substrate binding site. Substrate contacts are provided by Tyr116, Arg120, and Ser124. Residues 133-134 (QS) and Trp177 contribute to the FMN site. Position 183–185 (183–185 (RLH)) interacts with substrate. Arg187 provides a ligand contact to FMN.

It belongs to the pyridoxamine 5'-phosphate oxidase family. As to quaternary structure, homodimer. FMN is required as a cofactor.

It catalyses the reaction pyridoxamine 5'-phosphate + O2 + H2O = pyridoxal 5'-phosphate + H2O2 + NH4(+). It carries out the reaction pyridoxine 5'-phosphate + O2 = pyridoxal 5'-phosphate + H2O2. Its pathway is cofactor metabolism; pyridoxal 5'-phosphate salvage; pyridoxal 5'-phosphate from pyridoxamine 5'-phosphate: step 1/1. The protein operates within cofactor metabolism; pyridoxal 5'-phosphate salvage; pyridoxal 5'-phosphate from pyridoxine 5'-phosphate: step 1/1. Functionally, catalyzes the oxidation of either pyridoxine 5'-phosphate (PNP) or pyridoxamine 5'-phosphate (PMP) into pyridoxal 5'-phosphate (PLP). This Jannaschia sp. (strain CCS1) protein is Pyridoxine/pyridoxamine 5'-phosphate oxidase.